The following is a 305-amino-acid chain: UDP-3-O-acyl-N-acetylglucosamine deacetylase (305 aa).

Positions 78, 237, and 241 each coordinate Zn(2+). The active-site Proton donor is His-264.

This sequence belongs to the LpxC family. Requires Zn(2+) as cofactor.

The enzyme catalyses a UDP-3-O-[(3R)-3-hydroxyacyl]-N-acetyl-alpha-D-glucosamine + H2O = a UDP-3-O-[(3R)-3-hydroxyacyl]-alpha-D-glucosamine + acetate. The protein operates within glycolipid biosynthesis; lipid IV(A) biosynthesis; lipid IV(A) from (3R)-3-hydroxytetradecanoyl-[acyl-carrier-protein] and UDP-N-acetyl-alpha-D-glucosamine: step 2/6. Catalyzes the hydrolysis of UDP-3-O-myristoyl-N-acetylglucosamine to form UDP-3-O-myristoylglucosamine and acetate, the committed step in lipid A biosynthesis. The polypeptide is UDP-3-O-acyl-N-acetylglucosamine deacetylase (Cupriavidus metallidurans (strain ATCC 43123 / DSM 2839 / NBRC 102507 / CH34) (Ralstonia metallidurans)).